Consider the following 171-residue polypeptide: Tetratricopeptide repeat protein 9C (171 aa).

3 TPR repeats span residues 8-41 (AQVYKEEGNQRYREGKYRDAVSRYHRALLQLRGL), 72-107 (THCYNNLAACLLQMEPVNYERVREYSQKVLERQPDN), and 108-141 (AKALYRAGVAFFHLQDYDRARHHLLAAVNRQPKD).

The protein belongs to the TTC9 family.

The polypeptide is Tetratricopeptide repeat protein 9C (Ttc9c) (Mus musculus (Mouse)).